Here is a 339-residue protein sequence, read N- to C-terminus: Phenylalanine--tRNA ligase alpha subunit (339 aa).

Residue Glu-250 coordinates Mg(2+).

Belongs to the class-II aminoacyl-tRNA synthetase family. Phe-tRNA synthetase alpha subunit type 1 subfamily. As to quaternary structure, tetramer of two alpha and two beta subunits. Requires Mg(2+) as cofactor.

The protein localises to the cytoplasm. It carries out the reaction tRNA(Phe) + L-phenylalanine + ATP = L-phenylalanyl-tRNA(Phe) + AMP + diphosphate + H(+). This is Phenylalanine--tRNA ligase alpha subunit from Flavobacterium johnsoniae (strain ATCC 17061 / DSM 2064 / JCM 8514 / BCRC 14874 / CCUG 350202 / NBRC 14942 / NCIMB 11054 / UW101) (Cytophaga johnsonae).